The following is a 100-amino-acid chain: Large ribosomal subunit protein uL23 (100 aa).

It belongs to the universal ribosomal protein uL23 family. As to quaternary structure, part of the 50S ribosomal subunit. Contacts protein L29, and trigger factor when it is bound to the ribosome.

Functionally, one of the early assembly proteins it binds 23S rRNA. One of the proteins that surrounds the polypeptide exit tunnel on the outside of the ribosome. Forms the main docking site for trigger factor binding to the ribosome. The protein is Large ribosomal subunit protein uL23 of Shewanella halifaxensis (strain HAW-EB4).